A 92-amino-acid polypeptide reads, in one-letter code: MTRSLKKNPFVANHLLKKINKLNNKAEKEIIVTWSRASTIIPTMIGHTIAIHNGKEHLPIYITDRMVGHKLGEFAPTLNFRGHAKNDNKSRR.

The protein belongs to the universal ribosomal protein uS19 family.

The protein resides in the plastid. It is found in the chloroplast. In terms of biological role, protein S19 forms a complex with S13 that binds strongly to the 16S ribosomal RNA. This chain is Small ribosomal subunit protein uS19c, found in Manihot esculenta (Cassava).